The primary structure comprises 1303 residues: Phosphoribosylformylglycinamidine synthase (1303 aa).

ATP-binding positions include 308–319 (GASTGSGGEIRD) and Ala-679. Residues Glu-719, Asn-723, and Asp-892 each contribute to the Mg(2+) site. The tract at residues 1003–1023 (LRDNPACADQEHEAKKDNSDP) is disordered. Basic and acidic residues predominate over residues 1011–1021 (DQEHEAKKDNS). Residues 1050 to 1303 (MAILREQGVN…MFQNARKNIG (254 aa)) form the Glutamine amidotransferase type-1 domain. Catalysis depends on Cys-1143, which acts as the Nucleophile. Active-site residues include His-1268 and Glu-1270.

In the N-terminal section; belongs to the FGAMS family. As to quaternary structure, monomer.

The protein resides in the cytoplasm. It carries out the reaction N(2)-formyl-N(1)-(5-phospho-beta-D-ribosyl)glycinamide + L-glutamine + ATP + H2O = 2-formamido-N(1)-(5-O-phospho-beta-D-ribosyl)acetamidine + L-glutamate + ADP + phosphate + H(+). It functions in the pathway purine metabolism; IMP biosynthesis via de novo pathway; 5-amino-1-(5-phospho-D-ribosyl)imidazole from N(2)-formyl-N(1)-(5-phospho-D-ribosyl)glycinamide: step 1/2. Functionally, phosphoribosylformylglycinamidine synthase involved in the purines biosynthetic pathway. Catalyzes the ATP-dependent conversion of formylglycinamide ribonucleotide (FGAR) and glutamine to yield formylglycinamidine ribonucleotide (FGAM) and glutamate. This Aliivibrio fischeri (strain ATCC 700601 / ES114) (Vibrio fischeri) protein is Phosphoribosylformylglycinamidine synthase.